The primary structure comprises 388 residues: LL-diaminopimelate aminotransferase (388 aa).

Substrate-binding residues include Tyr-15 and Gly-40. Pyridoxal 5'-phosphate-binding positions include Tyr-69, 103 to 104 (SK), Tyr-128, Asn-178, Tyr-209, and 237 to 239 (SLS). Substrate is bound by residues Lys-104, Tyr-128, and Asn-178. Lys-240 is modified (N6-(pyridoxal phosphate)lysine). Arg-248 provides a ligand contact to pyridoxal 5'-phosphate. Arg-366 is a substrate binding site.

Belongs to the class-I pyridoxal-phosphate-dependent aminotransferase family. LL-diaminopimelate aminotransferase subfamily. In terms of assembly, homodimer. It depends on pyridoxal 5'-phosphate as a cofactor.

The enzyme catalyses (2S,6S)-2,6-diaminopimelate + 2-oxoglutarate = (S)-2,3,4,5-tetrahydrodipicolinate + L-glutamate + H2O + H(+). It functions in the pathway amino-acid biosynthesis; L-lysine biosynthesis via DAP pathway; LL-2,6-diaminopimelate from (S)-tetrahydrodipicolinate (aminotransferase route): step 1/1. In terms of biological role, involved in the synthesis of meso-diaminopimelate (m-DAP or DL-DAP), required for both lysine and peptidoglycan biosynthesis. Catalyzes the direct conversion of tetrahydrodipicolinate to LL-diaminopimelate. Can also use m-DAP instead of LL-DAP as the amino-group donor. This Syntrophobacter fumaroxidans (strain DSM 10017 / MPOB) protein is LL-diaminopimelate aminotransferase.